A 353-amino-acid chain; its full sequence is Forkhead box protein I3-A (353 aa).

Positions 116 to 210 form a DNA-binding region, fork-head; the sequence is RPPYSYSALI…DNGNFRRKRK (95 aa). Residues 201 to 255 are disordered; the sequence is DNGNFRRKRKRKSDSLAEEEGKGYSGSDSALSSPKNPSDSSERGNSPISTDQAPC. Residues 206–212 carry the Nuclear localization signal motif; that stretch reads RRKRKRK. Over residues 213–222 the composition is skewed to basic and acidic residues; sequence SDSLAEEEGK. A compositionally biased stretch (polar residues) spans 226–252; that stretch reads GSDSALSSPKNPSDSSERGNSPISTDQ.

Expressed in ionocyte precursors.

The protein localises to the nucleus. Functionally, transcription factor required for epithelial cell differentiation. Involved in specification of skin ionocytes from epidermal precursors. The protein is Forkhead box protein I3-A of Danio rerio (Zebrafish).